The primary structure comprises 635 residues: BTB/POZ domain and ankyrin repeat-containing protein NPR2 (635 aa).

A BTB domain is found at 97–191 (SDADVDVADG…LYTGKLRPAP (95 aa)). A compositionally biased stretch (gly residues) spans 138 to 152 (AAGGGGGGGGGGGER). Residues 138-157 (AAGGGGGGGGGGGERTGGRP) are disordered. Residues 194–208 (VVSCADPMCPHDSCP) form a C2HC NPR-type zinc finger. The Zn(2+) site is built by Cys-197, Cys-202, His-204, and Cys-207. 3 ANK repeats span residues 317-347 (KRVR…TLDD), 349-376 (NALH…NLNL), and 380-409 (RGYT…AVSQ). The tract at residues 439 to 576 (ESNKDRLCID…FLEDDLPDSP (138 aa)) is salicylic acid-binding core (SBC). Residue Arg-484 coordinates salicylate.

Belongs to the plant 'ANKYRIN-BTB/POZ' family. 'NPR1-like' subfamily. In terms of assembly, interacts with NRR. Interacts with TGAL1 and TGAL11.

Its subcellular location is the nucleus. The protein operates within protein modification; protein ubiquitination. Functionally, salicylic acid (SA)-binding substrate-specific adapter of an E3 ubiquitin-protein ligase complex (CUL3-RBX1-BTB) which mediates the ubiquitination and subsequent proteasomal degradation of target proteins. May be involved in regulating basal defense responses against pathogens, and may be involved in crosstalk between SA- and JA-dependent signaling pathways. Does not seem to be involved in defense response against the bacterial blight disease caused by Xanthomonas oryzae pv. oryzae (Xoo). Over-expression of NPR2/NH2 does not confer disease resistance to Xoo. In Oryza sativa subsp. japonica (Rice), this protein is BTB/POZ domain and ankyrin repeat-containing protein NPR2.